A 318-amino-acid polypeptide reads, in one-letter code: MAEHQVPRPQKPPRRDVHGVLLLDKPIGWSSNDALIRAKRLLWAKKAGHTGTLDPLATGLLPLCFGEATKFSQDLLDADKTYETVVRLGIRTSTADAEGEVLSERPVSVTPEQLQAAIARFVGEIDQVPPMHSALKKDGKPLYEYARAGQTVERAARRVTIYAIDVLATDLQSAEPTVTLRVSCSKGTYIRTLGEDIGEALGCGGHLVALRRTQVGNLTLDGAVTLEALDAAAEDARGALLAPVDALLQTLPRVELDAQESRRFLHGQRLPLQLALPNADQVRVYGVRDAIAADATASLLGVAAWQGGVLRPERLVHL.

Aspartate 54 functions as the Nucleophile in the catalytic mechanism.

It belongs to the pseudouridine synthase TruB family. Type 1 subfamily.

The enzyme catalyses uridine(55) in tRNA = pseudouridine(55) in tRNA. Its function is as follows. Responsible for synthesis of pseudouridine from uracil-55 in the psi GC loop of transfer RNAs. The chain is tRNA pseudouridine synthase B from Ralstonia pickettii (strain 12J).